A 491-amino-acid chain; its full sequence is Delayed-rectifier potassium channel regulatory subunit KCNS3 (491 aa).

Over 1-182 the chain is Cytoplasmic; that stretch reads MVFGEFFHRP…IRMENPAYCL (182 aa). The chain crosses the membrane as a helical span at residues 183-204; the sequence is SAKLIAISSLSVVLASIVAMCV. The Extracellular portion of the chain corresponds to 205–220; sequence HSMSEFQNEDGEVDDP. Residues 221 to 243 traverse the membrane as a helical segment; it reads VLEGVEIACIAWFTGELAVRLVA. At 244–254 the chain is on the cytoplasmic side; the sequence is APCQKKFWKNP. Residues 255 to 275 form a helical membrane-spanning segment; it reads LNIIDFVSIIPFYATLAVDTK. Residues 276–285 are Extracellular-facing; the sequence is EEESEDIENM. A helical; Voltage-sensor transmembrane segment spans residues 286–306; the sequence is GKVVQILRLMRIFRILKLARH. The Cytoplasmic segment spans residues 307-321; it reads SVGLRSLGATLRHSY. Residues 322–343 form a helical membrane-spanning segment; sequence HEVGLLLLFLSVGISIFSVLIY. The Extracellular segment spans residues 344–357; that stretch reads SVEKDDHTSSLTSI. The helical intramembrane region spans 358–369; it reads PICWWWATISMT. The Selectivity filter motif lies at 370-375; the sequence is TVGYGD. Residues 370–377 lie within the membrane without spanning it; the sequence is TVGYGDTH. Topologically, residues 378 to 384 are extracellular; it reads PVTLAGK. Residues 385 to 413 form a helical membrane-spanning segment; sequence LIASTCIICGILVVALPITIIFNKFSKYY. The Cytoplasmic segment spans residues 414-491; that stretch reads QKQKDIDVDQ…TASLENCTAK (78 aa).

Belongs to the potassium channel family. S (TC 1.A.1.2) subfamily. Kv9.3/KCNS3 sub-subfamily. Heterotetramer with KCNB1. Does not form homomultimers.

Its subcellular location is the cell membrane. Functionally, potassium channel regulatory subunit that modulates the delayed rectifier potassium channel activity of KCNB1 by namely slowing down the deactivation and inactivation time constants. While it does not form functional channel on its own, it can form functional heterotetrameric channels with KCNB1. This Oryctolagus cuniculus (Rabbit) protein is Delayed-rectifier potassium channel regulatory subunit KCNS3.